The following is a 234-amino-acid chain: Ubiquinone biosynthesis O-methyltransferase (234 aa).

Arginine 36, glycine 56, aspartate 77, and methionine 125 together coordinate S-adenosyl-L-methionine.

This sequence belongs to the methyltransferase superfamily. UbiG/COQ3 family.

It carries out the reaction a 3-demethylubiquinol + S-adenosyl-L-methionine = a ubiquinol + S-adenosyl-L-homocysteine + H(+). The catalysed reaction is a 3-(all-trans-polyprenyl)benzene-1,2-diol + S-adenosyl-L-methionine = a 2-methoxy-6-(all-trans-polyprenyl)phenol + S-adenosyl-L-homocysteine + H(+). It functions in the pathway cofactor biosynthesis; ubiquinone biosynthesis. O-methyltransferase that catalyzes the 2 O-methylation steps in the ubiquinone biosynthetic pathway. In Actinobacillus pleuropneumoniae serotype 7 (strain AP76), this protein is Ubiquinone biosynthesis O-methyltransferase.